The primary structure comprises 484 residues: Glutamate--tRNA ligase (484 aa).

The short motif at 11 to 21 (PSPTGYLHIGN) is the 'HIGH' region element. Residues 252 to 256 (KLSKR) carry the 'KMSKS' region motif. ATP is bound at residue Lys255.

It belongs to the class-I aminoacyl-tRNA synthetase family. Glutamate--tRNA ligase type 1 subfamily. Monomer.

Its subcellular location is the cytoplasm. The catalysed reaction is tRNA(Glu) + L-glutamate + ATP = L-glutamyl-tRNA(Glu) + AMP + diphosphate. Catalyzes the attachment of glutamate to tRNA(Glu) in a two-step reaction: glutamate is first activated by ATP to form Glu-AMP and then transferred to the acceptor end of tRNA(Glu). This is Glutamate--tRNA ligase from Staphylococcus aureus (strain Mu3 / ATCC 700698).